Reading from the N-terminus, the 229-residue chain is 2-C-methyl-D-erythritol 4-phosphate cytidylyltransferase (229 aa).

Belongs to the IspD/TarI cytidylyltransferase family. IspD subfamily.

The catalysed reaction is 2-C-methyl-D-erythritol 4-phosphate + CTP + H(+) = 4-CDP-2-C-methyl-D-erythritol + diphosphate. It functions in the pathway isoprenoid biosynthesis; isopentenyl diphosphate biosynthesis via DXP pathway; isopentenyl diphosphate from 1-deoxy-D-xylulose 5-phosphate: step 2/6. Functionally, catalyzes the formation of 4-diphosphocytidyl-2-C-methyl-D-erythritol from CTP and 2-C-methyl-D-erythritol 4-phosphate (MEP). The protein is 2-C-methyl-D-erythritol 4-phosphate cytidylyltransferase of Neisseria meningitidis serogroup B (strain ATCC BAA-335 / MC58).